Reading from the N-terminus, the 103-residue chain is Cystatin-A1 (103 aa).

Positions 51–55 (QVVAG) match the Secondary area of contact motif.

It belongs to the cystatin family.

It is found in the cytoplasm. In terms of biological role, this is an intracellular thiol proteinase inhibitor. In Sus scrofa (Pig), this protein is Cystatin-A1.